A 201-amino-acid polypeptide reads, in one-letter code: Dephospho-CoA kinase (201 aa).

In terms of domain architecture, DPCK spans 4-201; the sequence is IIGITGGIAS…LEGGRQDDRD (198 aa). 12 to 17 contributes to the ATP binding site; that stretch reads ASGKST.

Belongs to the CoaE family.

The protein localises to the cytoplasm. It carries out the reaction 3'-dephospho-CoA + ATP = ADP + CoA + H(+). Its pathway is cofactor biosynthesis; coenzyme A biosynthesis; CoA from (R)-pantothenate: step 5/5. In terms of biological role, catalyzes the phosphorylation of the 3'-hydroxyl group of dephosphocoenzyme A to form coenzyme A. This Streptococcus pneumoniae serotype 4 (strain ATCC BAA-334 / TIGR4) protein is Dephospho-CoA kinase.